The following is a 66-amino-acid chain: Opicalcin-2 (66 aa).

An N-terminal signal peptide occupies residues 1–22 (MKPSLIIVTFIVVFMTISCVAA). A propeptide spanning residues 23–31 (DDEQETWIE) is cleaved from the precursor. Disulfide bonds link cysteine 36–cysteine 50, cysteine 43–cysteine 54, and cysteine 49–cysteine 65. The segment at 55 to 57 (KRR) is essential for stimulation of [3H]ryanodine binding to RYR1.

The protein belongs to the scorpion calcin family. In terms of tissue distribution, expressed by the venom gland.

It is found in the secreted. Its function is as follows. This toxin stabilizes ryanodine receptor 1 (RyR1) opening in a long-lasting subconductance state (40% of the full conductance state). Furthermore, it triggers calcium release from sarcoplasmic vesicles (64.2 nM are enough to induce a sharp release, and 50% of the total calcium is released after toxin (100 nM) addition) probably by acting as a cell-penetrating peptide (CPP). In addition, it has been shown to dose-dependently stimulate ryanodine binding to RyR1 (EC(50)=3.2 nM). It also augments the bell-shaped calcium-[3H]ryanodine binding curve that is maximal at about 10 uM calcium concentration. It binds a different site as ryanodine. It acts synergistically with caffeine. In vivo, intracerebroventricular injection into mice induces neurotoxic symptoms, followed by death. The protein is Opicalcin-2 of Opistophthalmus carinatus (African yellow leg scorpion).